The sequence spans 168 residues: Plastocyanin, chloroplastic (168 aa).

Residues 70-168 (VEVLLGGGDG…AGMVGKVTVN (99 aa)) form the Plastocyanin-like domain. Residues His-106, Cys-153, His-156, and Met-161 each contribute to the Cu cation site.

Belongs to the plastocyanin family. Cu(2+) is required as a cofactor.

The protein localises to the plastid. Its subcellular location is the chloroplast thylakoid membrane. In terms of biological role, participates in electron transfer between P700 and the cytochrome b6-f complex in photosystem I. The polypeptide is Plastocyanin, chloroplastic (PETE) (Spinacia oleracea (Spinach)).